The following is a 212-amino-acid chain: Ribonuclease HII (212 aa).

The 185-residue stretch at 28–212 folds into the RNase H type-2 domain; it reads SIIAGVDEVG…KSFAPIRQVV (185 aa). A divalent metal cation is bound by residues Asp-34, Glu-35, and Asp-127.

This sequence belongs to the RNase HII family. The cofactor is Mn(2+). Mg(2+) serves as cofactor.

It is found in the cytoplasm. The catalysed reaction is Endonucleolytic cleavage to 5'-phosphomonoester.. In terms of biological role, endonuclease that specifically degrades the RNA of RNA-DNA hybrids. This chain is Ribonuclease HII, found in Chlamydia caviae (strain ATCC VR-813 / DSM 19441 / 03DC25 / GPIC) (Chlamydophila caviae).